Consider the following 319-residue polypeptide: 2,3,4,5-tetrahydropyridine-2,6-dicarboxylate N-succinyltransferase (319 aa).

Positions 167 and 184 each coordinate Mg(2+). Glutamate 200 acts as the Acyl-anhydride intermediate in catalysis. Succinyl-CoA is bound by residues arginine 202, glycine 217, serine 220, alanine 243, 258–259 (EA), and lysine 278.

The protein belongs to the type 2 tetrahydrodipicolinate N-succinyltransferase family. As to quaternary structure, homotrimer.

The protein resides in the cytoplasm. The catalysed reaction is (S)-2,3,4,5-tetrahydrodipicolinate + succinyl-CoA + H2O = (S)-2-succinylamino-6-oxoheptanedioate + CoA. The protein operates within amino-acid biosynthesis; L-lysine biosynthesis via DAP pathway; LL-2,6-diaminopimelate from (S)-tetrahydrodipicolinate (succinylase route): step 1/3. Functionally, catalyzes the conversion of the cyclic tetrahydrodipicolinate (THDP) into the acyclic N-succinyl-L-2-amino-6-oxopimelate using succinyl-CoA. The protein is 2,3,4,5-tetrahydropyridine-2,6-dicarboxylate N-succinyltransferase of Salinispora tropica (strain ATCC BAA-916 / DSM 44818 / JCM 13857 / NBRC 105044 / CNB-440).